We begin with the raw amino-acid sequence, 223 residues long: CKLF-like MARVEL transmembrane domain-containing protein 5 (223 aa).

An MARVEL domain is found at 29-213 (FLTSHKGILL…DAFKIYRTEM (185 aa)). Helical transmembrane passes span 35–55 (GILL…FTAS), 56–76 (ISAY…FLFL), 162–182 (FLRC…AVTS), and 186–206 (AAIA…YDAF).

This sequence belongs to the chemokine-like factor family. Highly expressed in the brain.

It is found in the membrane. This is CKLF-like MARVEL transmembrane domain-containing protein 5 (CMTM5) from Homo sapiens (Human).